The chain runs to 116 residues: U11-theraphotoxin-Hhn1c (116 aa).

Residues 1 to 21 (MNTVRVTFLLVFVLAVSLGQA) form the signal peptide. Positions 22–74 (DKDENRMEMQEKTEQGKSYLDFAENLLLQKLEELEAKLLEEDSEESRNSRQKR) are excised as a propeptide. Residues 61–83 (EEDSEESRNSRQKRCIGEGVPCD) form a disordered region. Cystine bridges form between cysteine 75–cysteine 90, cysteine 82–cysteine 95, and cysteine 89–cysteine 110.

This sequence belongs to the neurotoxin 14 (magi-1) family. 01 (HNTX-16) subfamily. As to expression, expressed by the venom gland.

Its subcellular location is the secreted. Probable ion channel inhibitor. The polypeptide is U11-theraphotoxin-Hhn1c (Cyriopagopus hainanus (Chinese bird spider)).